We begin with the raw amino-acid sequence, 875 residues long: GATOR2 complex protein MIOS (875 aa).

7 WD repeats span residues 58–100 (SDTP…NSKF), 111–155 (KHAR…TPDI), 182–221 (GQND…QKMF), 223–261 (NTKA…KPVL), 265–306 (EQPK…TPIG), 320–360 (PCDN…SLAW), and 395–437 (RLRA…KQYT). The segment at 735-781 (VSCNFCGKSISYSCSSVPHQGRGFSQYGVSGSPTKSKVTSCPGCRKP) adopts a C4-type zinc-finger fold. Positions 737 and 740 each coordinate Zn(2+). Phosphoserine is present on residues Ser759 and Ser766. The Zn(2+) site is built by Cys775, Cys778, Cys788, Cys827, Cys830, His832, His835, His838, Cys849, Cys854, and Cys858. The RING-type; atypical zinc-finger motif lies at 782–863 (LPRCALCLIN…CTCKCMQLDT (82 aa)).

The protein belongs to the WD repeat mio family. In terms of assembly, component of the GATOR2 subcomplex, composed of MIOS, SEC13, SEH1L, WDR24 and WDR59. The GATOR2 complex interacts with CASTOR1 and CASTOR2; the interaction is negatively regulated by arginine. CASTOR1 and CASTOR2 convey leucine availability via direct interaction with MIOS. The GATOR2 complex interacts with SESN1, SESN2 and SESN3; the interaction is negatively regulated by amino acids. Interacts with SAR1A and SAR1B; the interaction is direct, disrupted by leucine and mediates the interaction of SAR1A or SAR1B with the GATOR2 complex to negatively regulate the TORC1 signaling upon leucine deprivation. In terms of tissue distribution, widely expressed. In brain, expressed in neurons and glia (oligodendrocytes and astrocytes), with more abundance in neurons.

Its subcellular location is the lysosome membrane. Its activity is regulated as follows. The GATOR2 complex is negatively regulated by the upstream amino acid sensors CASTOR1 and SESN2, which sequester the GATOR2 complex in absence of amino acids. In the presence of abundant amino acids, GATOR2 is released from CASTOR1 and SESN2 and activated. In terms of biological role, as a component of the GATOR2 complex, functions as an activator of the amino acid-sensing branch of the mTORC1 signaling pathway. The GATOR2 complex indirectly activates mTORC1 through the inhibition of the GATOR1 subcomplex. GATOR2 probably acts as an E3 ubiquitin-protein ligase toward GATOR1. In the presence of abundant amino acids, the GATOR2 complex mediates ubiquitination of the NPRL2 core component of the GATOR1 complex, leading to GATOR1 inactivation. In the absence of amino acids, GATOR2 is inhibited, activating the GATOR1 complex. Within the GATOR2 complex, MIOS is required to prevent autoubiquitination of WDR24, the catalytic subunit of the complex. The GATOR2 complex is required for brain myelination. The protein is GATOR2 complex protein MIOS of Mus musculus (Mouse).